The chain runs to 449 residues: Methionine aminopeptidase 2 (449 aa).

Positions 1-91 (MAAQAAPELA…PRIPLTTLFP (91 aa)) are disordered. Positions 34-50 (EEAENEGDSDDDRDDEQ) are enriched in acidic residues. Over residues 61 to 75 (KKKKKKRPKKKKKTA) the composition is skewed to basic residues. H199 contacts substrate. The a divalent metal cation site is built by D219, D230, and H299. H307 contributes to the substrate binding site. A divalent metal cation is bound by residues E335 and E430.

It belongs to the peptidase M24A family. Methionine aminopeptidase eukaryotic type 2 subfamily. Co(2+) is required as a cofactor. Zn(2+) serves as cofactor. It depends on Mn(2+) as a cofactor. The cofactor is Fe(2+).

The protein localises to the cytoplasm. The enzyme catalyses Release of N-terminal amino acids, preferentially methionine, from peptides and arylamides.. In terms of biological role, cotranslationally removes the N-terminal methionine from nascent proteins. The N-terminal methionine is often cleaved when the second residue in the primary sequence is small and uncharged (Met-Ala-, Cys, Gly, Pro, Ser, Thr, or Val). This is Methionine aminopeptidase 2 from Arthroderma benhamiae (strain ATCC MYA-4681 / CBS 112371) (Trichophyton mentagrophytes).